A 354-amino-acid polypeptide reads, in one-letter code: Guanine nucleotide-binding protein alpha-3 subunit (354 aa).

Gly2 carries the N-myristoyl glycine lipid modification. Cys4 is lipidated: S-palmitoyl cysteine. A G-alpha domain is found at 32-354 (KVVKLLLLGA…QANLQGCGLY (323 aa)). A G1 motif region spans residues 35–48 (KLLLLGAGECGKST). GTP-binding positions include 40 to 47 (GAGECGKS), 176 to 182 (LLSRIKT), 201 to 205 (DVGGQ), 270 to 273 (NKKD), and Ala326. Mg(2+)-binding residues include Ser47 and Thr182. The segment at 174–182 (DILLSRIKT) is G2 motif. Positions 197-206 (FRVFDVGGQR) are G3 motif. The interval 266–273 (ILFLNKKD) is G4 motif. Residues 324–329 (TCATDT) are G5 motif.

It belongs to the G-alpha family. G(q) subfamily. G proteins are composed of 3 units; alpha, beta and gamma. The alpha chain contains the guanine nucleotide binding site.

In terms of biological role, guanine nucleotide-binding proteins (G proteins) are involved as modulators or transducers in various transmembrane signaling systems. Promotes transcription of 3',5'-cyclic phosphodiesterases pde-1 and pde-5, leading to reduced cGMP levels in sensory neurons. This causes suppression of insulin production and signaling which leads to increased daf-16 activity and contributes to increased adult lifespan and resistance to oxidative stress. In addition, by reducing cGMP levels, inhibits TGF-beta signaling pathways. Involved in behavioral response to P.aeruginosa by controlling the expression of daf-7, a member of the TGF-beta family, in ASJ sensory neurons. This chain is Guanine nucleotide-binding protein alpha-3 subunit (gpa-3), found in Caenorhabditis briggsae.